The following is a 464-amino-acid chain: Glutamate--tRNA ligase (464 aa).

Positions 11–21 (PSPTGFIHLGN) match the 'HIGH' region motif. A 'KMSKS' region motif is present at residues 243–247 (KMSKR). Lys-246 is an ATP binding site.

It belongs to the class-I aminoacyl-tRNA synthetase family. Glutamate--tRNA ligase type 1 subfamily. In terms of assembly, monomer.

Its subcellular location is the cytoplasm. It catalyses the reaction tRNA(Glu) + L-glutamate + ATP = L-glutamyl-tRNA(Glu) + AMP + diphosphate. Catalyzes the attachment of glutamate to tRNA(Glu) in a two-step reaction: glutamate is first activated by ATP to form Glu-AMP and then transferred to the acceptor end of tRNA(Glu). In Polaromonas naphthalenivorans (strain CJ2), this protein is Glutamate--tRNA ligase.